Here is a 440-residue protein sequence, read N- to C-terminus: Na(+)/H(+) antiporter NhaA (440 aa).

11 consecutive transmembrane segments (helical) span residues 25-45 (FLHI…VALV), 76-96 (LHHV…GLEV), 112-132 (TLPI…YLSM), 141-161 (GWGI…AILG), 170-190 (VLLL…IAIG), 194-214 (SLDG…HFLS), 225-245 (VIVG…ATLI), 312-332 (HPWT…GVLI), 345-365 (VVIG…WLVI), 378-398 (WPIL…ALFI), and 414-434 (GVLV…LWTL).

This sequence belongs to the NhaA Na(+)/H(+) (TC 2.A.33) antiporter family.

The protein localises to the cell inner membrane. The enzyme catalyses Na(+)(in) + 2 H(+)(out) = Na(+)(out) + 2 H(+)(in). Its function is as follows. Na(+)/H(+) antiporter that extrudes sodium in exchange for external protons. This Rhodopirellula baltica (strain DSM 10527 / NCIMB 13988 / SH1) protein is Na(+)/H(+) antiporter NhaA.